The chain runs to 83 residues: uncharacterized protein (83 aa).

This is an uncharacterized protein from Escherichia phage Bf23 (Enterobacteria phage BF23).